The following is a 155-amino-acid chain: UPF0305 protein MTH_811 (155 aa).

The protein belongs to the UPF0305 family.

The polypeptide is UPF0305 protein MTH_811 (Methanothermobacter thermautotrophicus (strain ATCC 29096 / DSM 1053 / JCM 10044 / NBRC 100330 / Delta H) (Methanobacterium thermoautotrophicum)).